We begin with the raw amino-acid sequence, 281 residues long: ATP synthase gamma chain (281 aa).

The protein belongs to the ATPase gamma chain family. F-type ATPases have 2 components, CF(1) - the catalytic core - and CF(0) - the membrane proton channel. CF(1) has five subunits: alpha(3), beta(3), gamma(1), delta(1), epsilon(1). CF(0) has three main subunits: a, b and c.

The protein localises to the cell membrane. Its function is as follows. Produces ATP from ADP in the presence of a proton gradient across the membrane. The gamma chain is believed to be important in regulating ATPase activity and the flow of protons through the CF(0) complex. This chain is ATP synthase gamma chain, found in Desulfitobacterium hafniense (strain DSM 10664 / DCB-2).